Here is a 309-residue protein sequence, read N- to C-terminus: Ribose-phosphate pyrophosphokinase (309 aa).

ATP-binding positions include 42-44 (DEE) and 102-103 (RQ). Positions 136 and 175 each coordinate Mg(2+). Residue Lys199 is part of the active site. Residues Arg201, Asp226, and 230–234 (STGGT) each bind D-ribose 5-phosphate.

The protein belongs to the ribose-phosphate pyrophosphokinase family. Class III (archaeal) subfamily. Mg(2+) is required as a cofactor.

The protein resides in the cytoplasm. It carries out the reaction D-ribose 5-phosphate + ATP = 5-phospho-alpha-D-ribose 1-diphosphate + AMP + H(+). The protein operates within metabolic intermediate biosynthesis; 5-phospho-alpha-D-ribose 1-diphosphate biosynthesis; 5-phospho-alpha-D-ribose 1-diphosphate from D-ribose 5-phosphate (route I): step 1/1. Functionally, involved in the biosynthesis of the central metabolite phospho-alpha-D-ribosyl-1-pyrophosphate (PRPP) via the transfer of pyrophosphoryl group from ATP to 1-hydroxyl of ribose-5-phosphate (Rib-5-P). This is Ribose-phosphate pyrophosphokinase from Aeropyrum pernix (strain ATCC 700893 / DSM 11879 / JCM 9820 / NBRC 100138 / K1).